Reading from the N-terminus, the 112-residue chain is uncharacterized protein (112 aa).

This is an uncharacterized protein from Caenorhabditis elegans.